Here is an 85-residue protein sequence, read N- to C-terminus: Large ribosomal subunit protein bL27 (85 aa).

Positions 1–20 (MAHKKAGGSSRNGRDSEAKR) are disordered.

It belongs to the bacterial ribosomal protein bL27 family.

The polypeptide is Large ribosomal subunit protein bL27 (Aeromonas salmonicida (strain A449)).